Here is a 276-residue protein sequence, read N- to C-terminus: Large ribosomal subunit protein uL2 (276 aa).

A disordered region spans residues 224–276 (AMNPIDHPHGGGEGKTSGGRNPVTPWGVPTKGKKTRKRNKSSNKYIKRVSDKG). A compositionally biased stretch (basic residues) spans 254–270 (KGKKTRKRNKSSNKYIK).

This sequence belongs to the universal ribosomal protein uL2 family. Part of the 50S ribosomal subunit. Forms a bridge to the 30S subunit in the 70S ribosome.

Its function is as follows. One of the primary rRNA binding proteins. Required for association of the 30S and 50S subunits to form the 70S ribosome, for tRNA binding and peptide bond formation. It has been suggested to have peptidyltransferase activity; this is somewhat controversial. Makes several contacts with the 16S rRNA in the 70S ribosome. In Ehrlichia chaffeensis (strain ATCC CRL-10679 / Arkansas), this protein is Large ribosomal subunit protein uL2.